Here is a 183-residue protein sequence, read N- to C-terminus: Crossover junction endodeoxyribonuclease RuvC (183 aa).

Residues D16, E75, and D147 contribute to the active site. Mg(2+) is bound by residues D16, E75, and D147.

It belongs to the RuvC family. As to quaternary structure, homodimer which binds Holliday junction (HJ) DNA. The HJ becomes 2-fold symmetrical on binding to RuvC with unstacked arms; it has a different conformation from HJ DNA in complex with RuvA. In the full resolvosome a probable DNA-RuvA(4)-RuvB(12)-RuvC(2) complex forms which resolves the HJ. Mg(2+) serves as cofactor.

The protein localises to the cytoplasm. It catalyses the reaction Endonucleolytic cleavage at a junction such as a reciprocal single-stranded crossover between two homologous DNA duplexes (Holliday junction).. In terms of biological role, the RuvA-RuvB-RuvC complex processes Holliday junction (HJ) DNA during genetic recombination and DNA repair. Endonuclease that resolves HJ intermediates. Cleaves cruciform DNA by making single-stranded nicks across the HJ at symmetrical positions within the homologous arms, yielding a 5'-phosphate and a 3'-hydroxyl group; requires a central core of homology in the junction. The consensus cleavage sequence is 5'-(A/T)TT(C/G)-3'. Cleavage occurs on the 3'-side of the TT dinucleotide at the point of strand exchange. HJ branch migration catalyzed by RuvA-RuvB allows RuvC to scan DNA until it finds its consensus sequence, where it cleaves and resolves the cruciform DNA. The sequence is that of Crossover junction endodeoxyribonuclease RuvC from Azoarcus sp. (strain BH72).